The following is a 577-amino-acid chain: ATP-dependent zinc metalloprotease FtsH (577 aa).

The Cytoplasmic portion of the chain corresponds to 1–3; the sequence is MKK. Residues 4–24 traverse the membrane as a helical segment; it reads LYWIILIAVVLACSGILMSLH. The Extracellular segment spans residues 25–98; sequence LSVTKEEMTY…IKVDNSDSYS (74 aa). The helical transmembrane segment at 99 to 119 threads the bilayer; sequence ATKVIQIILIITVGTGVFLFI. Residues 120–577 are Cytoplasmic-facing; sequence RTSGGKDKPL…IDRICLKEAV (458 aa). 186–193 contacts ATP; the sequence is GPPGTGKT. Position 409 (histidine 409) interacts with Zn(2+). The active site involves glutamate 410. Residues histidine 413 and aspartate 487 each contribute to the Zn(2+) site.

In the central section; belongs to the AAA ATPase family. It in the C-terminal section; belongs to the peptidase M41 family. Homohexamer. Requires Zn(2+) as cofactor.

It is found in the cell membrane. In terms of biological role, acts as a processive, ATP-dependent zinc metallopeptidase for both cytoplasmic and membrane proteins. Plays a role in the quality control of integral membrane proteins. The protein is ATP-dependent zinc metalloprotease FtsH of Lachnoclostridium phytofermentans (strain ATCC 700394 / DSM 18823 / ISDg) (Clostridium phytofermentans).